The primary structure comprises 189 residues: Peptidyl-tRNA hydrolase (189 aa).

Y14 lines the tRNA pocket. The active-site Proton acceptor is H19. Y64, N66, and N112 together coordinate tRNA.

The protein belongs to the PTH family. Monomer.

It localises to the cytoplasm. The catalysed reaction is an N-acyl-L-alpha-aminoacyl-tRNA + H2O = an N-acyl-L-amino acid + a tRNA + H(+). In terms of biological role, hydrolyzes ribosome-free peptidyl-tRNAs (with 1 or more amino acids incorporated), which drop off the ribosome during protein synthesis, or as a result of ribosome stalling. Its function is as follows. Catalyzes the release of premature peptidyl moieties from peptidyl-tRNA molecules trapped in stalled 50S ribosomal subunits, and thus maintains levels of free tRNAs and 50S ribosomes. This is Peptidyl-tRNA hydrolase from Dehalococcoides mccartyi (strain ATCC BAA-2100 / JCM 16839 / KCTC 5957 / BAV1).